Reading from the N-terminus, the 372-residue chain is Saccharopine dehydrogenase [NAD(+), L-lysine-forming] (372 aa).

2 residues coordinate L-saccharopine: Arg18 and Lys77. The active-site Proton acceptor is Lys77. Catalysis depends on His95, which acts as the Proton donor. Gln100 lines the L-saccharopine pocket. Arg129 lines the NAD(+) pocket. L-saccharopine is bound by residues Arg130 and Phe134. NAD(+) contacts are provided by residues 200 to 201, Asp224, Thr228, Tyr248, and Val275; that span reads GR. A disulfide bond links Cys202 and Cys246. Position 276–278 (276–278) interacts with L-saccharopine; it reads SAD. Residue 316–319 participates in NAD(+) binding; sequence IDHL.

The protein belongs to the AlaDH/PNT family. In terms of assembly, monomer.

The enzyme catalyses L-saccharopine + NAD(+) + H2O = L-lysine + 2-oxoglutarate + NADH + H(+). It participates in amino-acid biosynthesis; L-lysine biosynthesis via AAA pathway; L-lysine from L-alpha-aminoadipate (fungal route): step 3/3. Catalyzes the NAD(+)-dependent cleavage of saccharopine to L-lysine and 2-oxoglutarate, the final step in the alpha-aminoadipate (AAA) pathway for lysin biosynthesis. This Neurospora crassa (strain ATCC 24698 / 74-OR23-1A / CBS 708.71 / DSM 1257 / FGSC 987) protein is Saccharopine dehydrogenase [NAD(+), L-lysine-forming] (lys-4).